A 303-amino-acid chain; its full sequence is Probable cell division protein WhiA (303 aa).

Residues 272 to 303 constitute a DNA-binding region (H-T-H motif); the sequence is SLQQIADSLDFAITKSGVNHRLRKINKLAEDL.

It belongs to the WhiA family.

Functionally, involved in cell division and chromosome segregation. The polypeptide is Probable cell division protein WhiA (Streptococcus equi subsp. zooepidemicus (strain MGCS10565)).